A 103-amino-acid chain; its full sequence is Serine rich endogenous peptide 9 (103 aa).

Residues 1 to 25 (MENIFFSKLTQVFIVALLCIFIYRT) form the signal peptide. The disordered stretch occupies residues 54-103 (IYVKPPPLKSKDSNQKGKRGETYYKPNSEIGTGPSHSGHGGSSIEHVSSP). Over residues 62–75 (KSKDSNQKGKRGET) the composition is skewed to basic and acidic residues. The short motif at 82–96 (EIGTGPSHSGHGGSS) is the SCOOP motif element. A compositionally biased stretch (low complexity) spans 84–103 (GTGPSHSGHGGSSIEHVSSP). Residues 88 to 90 (SHS) carry the SxS motif essential for MIK2 binding motif.

It belongs to the serine rich endogenous peptide (SCOOP) phytocytokine family. Interacts with MIK2 (via extracellular leucine-rich repeat domain); this interaction triggers the formation of complex between MIK2 and the BAK1/SERK3 and SERK4 coreceptors, and subsequent BAK1 activation by phosphorylation. In terms of tissue distribution, mostly expressed in seedlings shoots and roots, and, to a lower extent, in leaves, but barely in flowers.

Its subcellular location is the cell membrane. It localises to the secreted. The protein localises to the extracellular space. The protein resides in the apoplast. Brassicaceae-specific phytocytokine (plant endogenous peptide released into the apoplast) perceived by MIK2 in a BAK1/SERK3 and SERK4 coreceptors-dependent manner, that modulates various physiological and antimicrobial processes including growth prevention and reactive oxygen species (ROS) response regulation. In Arabidopsis thaliana (Mouse-ear cress), this protein is Serine rich endogenous peptide 9.